Reading from the N-terminus, the 335-residue chain is 3-hydroxy-3-methylglutaryl-CoA lyase, cytoplasmic (335 aa).

Gly-2 carries N-myristoyl glycine lipidation. A Pyruvate carboxyltransferase domain is found at 43–310; the sequence is VKIVEVGPRD…ETGVDLLKVM (268 aa). Substrate is bound at residue Arg-51. Residue Asp-52 coordinates a divalent metal cation. Residue Lys-58 is modified to N6-acetyllysine. A divalent metal cation contacts are provided by His-243 and His-245. Residue Cys-276 is part of the active site. Residue Asn-285 coordinates a divalent metal cation.

This sequence belongs to the HMG-CoA lyase family. A divalent metal cation serves as cofactor.

It is found in the cytoplasm. The protein resides in the cytosol. Its subcellular location is the endoplasmic reticulum membrane. The enzyme catalyses (3S)-3-hydroxy-3-methylglutaryl-CoA = acetoacetate + acetyl-CoA. Its pathway is metabolic intermediate metabolism; (S)-3-hydroxy-3-methylglutaryl-CoA degradation; acetoacetate from (S)-3-hydroxy-3-methylglutaryl-CoA: step 1/1. Functionally, non-mitochondrial 3-hydroxy-3-methylglutaryl-CoA lyase that catalyzes a cation-dependent cleavage of (S)-3-hydroxy-3-methylglutaryl-CoA into acetyl-CoA and acetoacetate, a key step in ketogenesis, the products of which support energy production in nonhepatic animal tissues. This chain is 3-hydroxy-3-methylglutaryl-CoA lyase, cytoplasmic (hmgcll1), found in Danio rerio (Zebrafish).